The following is a 378-amino-acid chain: MGVSSFYPPLHVQRRRKLFKILQGGFPVRSLLDIGCGDARFLSYLVPCNDQVPIEFLAGIDINEQSIERATEALQVRTEDFLQLRWRPLHIELLLGNIKDFTHYKHVDAVVASEFIEHCQVAEILAFEKLVFGNLKPNVCVVSTPNFEFNTIFEKLSTLTSSISSRTSTNFRHPEHVFEWDRKEFAKWAYKICKRYPEYTVEFTGCGLLNDLIDGDDLLHFRPSSTYGFCTQIAVFHQSKNNAASHCFLKDQNSSILLYKKITYPFMEQLFPPTVQQFMNLLKKAFFDHLFGRHCLLLFQVIAGKCALSVKLPFLFIWESSPLIRHAFHYDDSIYLSYCPELKKSKHKGIALANSFSFRIAKVLKKSRIFIITFHHYV.

Aspartate 61 contributes to the S-adenosyl-L-methionine binding site. Residues glutamate 114, glutamate 117, histidine 118, and histidine 176 each coordinate Mg(2+).

This sequence belongs to the methyltransferase superfamily. HEN1 family. Requires Mg(2+) as cofactor.

The protein resides in the cytoplasm. It catalyses the reaction small RNA 3'-end nucleotide + S-adenosyl-L-methionine = small RNA 3'-end 2'-O-methylnucleotide + S-adenosyl-L-homocysteine + H(+). In terms of biological role, methyltransferase that adds a 2'-O-methyl group at the 3'-end of small RNAs. The chain is Small RNA 2'-O-methyltransferase from Schizosaccharomyces pombe (strain 972 / ATCC 24843) (Fission yeast).